The chain runs to 606 residues: RUN and FYVE domain-containing protein 2 (606 aa).

One can recognise an RUN domain in the interval 37-169 (DSDYPPLQQF…IDANLCVKGE (133 aa)). A coiled-coil region spans residues 210–534 (EELNRQLNST…IKEANKALQG (325 aa)). The FYVE-type zinc finger occupies 540-598 (DKEATHCKLCEKEFSLSKRKHHCRNCGEIFCNACSDNELPLPSSPKPVRVCDSCHALLI). Zn(2+) is bound by residues cysteine 546, cysteine 549, cysteine 562, cysteine 565, cysteine 570, cysteine 573, cysteine 590, and cysteine 593.

In terms of assembly, interacts with BMX. In terms of tissue distribution, expressed in brain, lung and testis.

Its subcellular location is the nucleus. The polypeptide is RUN and FYVE domain-containing protein 2 (RUFY2) (Homo sapiens (Human)).